The following is a 614-amino-acid chain: DBH-like monooxygenase protein 1 (614 aa).

Residues 1–22 (MRPLRPWALLLGALLGAAAAAA) form the signal peptide. Over 23–592 (RRYPHVAVLD…SSSCLPCSLS (570 aa)) the chain is Lumenal. A DOMON domain is found at 35–148 (AAYRLLWGRR…STVRVIWAYH (114 aa)). Asn114 is a glycosylation site (N-linked (GlcNAc...) asparagine). Tyr203 is a catalytic residue. Cystine bridges form between Cys205-Cys257 and Cys242-Cys269. His235 and His236 together coordinate Cu cation. N-linked (GlcNAc...) asparagine glycosylation is present at Asn247. Residues His307, His389, His391, and Met464 each coordinate Cu cation. 3 cysteine pairs are disulfide-bonded: Cys364–Cys480, Cys368–Cys550, and Cys443–Cys465. The active site involves His389. N-linked (GlcNAc...) asparagine glycans are attached at residues Asn476 and Asn517. Residues 593–613 (LTLLFVVYVASSTIGNFGPVV) traverse the membrane as a helical segment.

It belongs to the copper type II ascorbate-dependent monooxygenase family. The cofactor is Cu(2+).

Its subcellular location is the endoplasmic reticulum membrane. In Gallus gallus (Chicken), this protein is DBH-like monooxygenase protein 1 (MOXD1).